We begin with the raw amino-acid sequence, 96 residues long: Citrate lyase acyl carrier protein (96 aa).

Ser-14 is modified (O-(phosphoribosyl dephospho-coenzyme A)serine).

This sequence belongs to the CitD family. Oligomer with a subunit composition of (alpha,beta,gamma)6.

Its subcellular location is the cytoplasm. Its function is as follows. Covalent carrier of the coenzyme of citrate lyase. This is Citrate lyase acyl carrier protein from Pectobacterium atrosepticum (strain SCRI 1043 / ATCC BAA-672) (Erwinia carotovora subsp. atroseptica).